The primary structure comprises 88 residues: Phosphocarrier protein HPr (88 aa).

Residues 1–88 (MKKIQVVVKD…KAVLEKHQVI (88 aa)) form the HPr domain. H15 acts as the Pros-phosphohistidine intermediate in catalysis. A Phosphoserine; by HPrK/P modification is found at S47.

Belongs to the HPr family.

It localises to the cytoplasm. Phosphorylation on Ser-47 inhibits the phosphoryl transfer from enzyme I to HPr. Its function is as follows. General (non sugar-specific) component of the phosphoenolpyruvate-dependent sugar phosphotransferase system (sugar PTS). This major carbohydrate active-transport system catalyzes the phosphorylation of incoming sugar substrates concomitantly with their translocation across the cell membrane. The phosphoryl group from phosphoenolpyruvate (PEP) is transferred to the phosphoryl carrier protein HPr by enzyme I. Phospho-HPr then transfers it to the PTS EIIA domain. In terms of biological role, P-Ser-HPr interacts with the catabolite control protein A (CcpA), forming a complex that binds to DNA at the catabolite response elements cre, operator sites preceding a large number of catabolite-regulated genes. Thus, P-Ser-HPr is a corepressor in carbon catabolite repression (CCR), a mechanism that allows bacteria to coordinate and optimize the utilization of available carbon sources. P-Ser-HPr also plays a role in inducer exclusion, in which it probably interacts with several non-PTS permeases and inhibits their transport activity. The sequence is that of Phosphocarrier protein HPr (ptsH) from Mycoplasma pneumoniae (strain ATCC 29342 / M129 / Subtype 1) (Mycoplasmoides pneumoniae).